Consider the following 424-residue polypeptide: ATP synthase subunit beta, mitochondrial (424 aa).

Residues 1 to 60 (MFRLSSGLLKGGACASRSRIPQLGRSLYSTATSAGADKTQGKIHTVIGAVVDVQFNHGRL) constitute a mitochondrion transit peptide. ATP is bound by residues 187 to 194 (GGAGVGKT), 188 to 195 (GAGVGKTV), 219 to 220 (ER), and tyrosine 374.

It belongs to the ATPase alpha/beta chains family. F-type ATPases have 2 components, CF(1) - the catalytic core - and CF(0) - the membrane proton channel. CF(1) has five subunits: alpha(3), beta(3), gamma(1), delta(1), epsilon(1). CF(0) has three main subunits: a, b and c.

It is found in the mitochondrion. It localises to the mitochondrion inner membrane. It catalyses the reaction ATP + H2O + 4 H(+)(in) = ADP + phosphate + 5 H(+)(out). In terms of biological role, ATP synthase subunit beta; part of the gene cluster that mediates the biosynthesis of citreoviridin, an inhibitor of the of F1-ATPase beta-subunit. Mitochondrial membrane ATP synthase (F(1)F(0) ATP synthase or Complex V) produces ATP from ADP in the presence of a proton gradient across the membrane which is generated by electron transport complexes of the respiratory chain. Whereas ctvA to ctvD constitute the core biosynthetic gene cluster, ctvE acts as a self-resistance gene. The sequence is that of ATP synthase subunit beta, mitochondrial from Aspergillus terreus (strain NIH 2624 / FGSC A1156).